Here is a 91-residue protein sequence, read N- to C-terminus: MARSVKKGPFCDAHLLKKVEAAAASRDKKPIKTWSRRSTILPDFIGLTIAVHNGRQHVPVYISENMVGHKLGEFALTRTFKGHAADKKAKK.

This sequence belongs to the universal ribosomal protein uS19 family.

Functionally, protein S19 forms a complex with S13 that binds strongly to the 16S ribosomal RNA. The polypeptide is Small ribosomal subunit protein uS19 (Burkholderia cenocepacia (strain HI2424)).